We begin with the raw amino-acid sequence, 275 residues long: Large ribosomal subunit protein uL2 (275 aa).

Residues 224-251 are disordered; the sequence is VMNPVDHPHGGGEGRSPIGRKAPVTPWG.

This sequence belongs to the universal ribosomal protein uL2 family. In terms of assembly, part of the 50S ribosomal subunit. Forms a bridge to the 30S subunit in the 70S ribosome.

One of the primary rRNA binding proteins. Required for association of the 30S and 50S subunits to form the 70S ribosome, for tRNA binding and peptide bond formation. It has been suggested to have peptidyltransferase activity; this is somewhat controversial. Makes several contacts with the 16S rRNA in the 70S ribosome. The protein is Large ribosomal subunit protein uL2 of Heliobacterium modesticaldum (strain ATCC 51547 / Ice1).